Here is a 633-residue protein sequence, read N- to C-terminus: Threonine--tRNA ligase (633 aa).

Positions 1–61 (MINITLPDGS…DHDASLRIIT (61 aa)) constitute a TGS domain. A catalytic region spans residues 243-534 (DHRRIGKQQD…LIEHHAGQFP (292 aa)). Zn(2+) contacts are provided by Cys-334, His-385, and His-511.

This sequence belongs to the class-II aminoacyl-tRNA synthetase family. In terms of assembly, homodimer. Zn(2+) serves as cofactor.

Its subcellular location is the cytoplasm. The enzyme catalyses tRNA(Thr) + L-threonine + ATP = L-threonyl-tRNA(Thr) + AMP + diphosphate + H(+). In terms of biological role, catalyzes the attachment of threonine to tRNA(Thr) in a two-step reaction: L-threonine is first activated by ATP to form Thr-AMP and then transferred to the acceptor end of tRNA(Thr). Also edits incorrectly charged L-seryl-tRNA(Thr). The polypeptide is Threonine--tRNA ligase (Stenotrophomonas maltophilia (strain R551-3)).